An 865-amino-acid polypeptide reads, in one-letter code: DNA mismatch repair protein MutS (865 aa).

An ATP-binding site is contributed by 605–612 (GPNMAGKS). The interval 814-833 (PEPLEAYKPKGNKQPLSDEE) is disordered.

It belongs to the DNA mismatch repair MutS family.

This protein is involved in the repair of mismatches in DNA. It is possible that it carries out the mismatch recognition step. This protein has a weak ATPase activity. This is DNA mismatch repair protein MutS from Halalkalibacterium halodurans (strain ATCC BAA-125 / DSM 18197 / FERM 7344 / JCM 9153 / C-125) (Bacillus halodurans).